A 257-amino-acid chain; its full sequence is Phosphatidylglycerol--prolipoprotein diacylglyceryl transferase (257 aa).

4 helical membrane-spanning segments follow: residues I8–Y28, V48–N68, E84–S104, and L109–G129. R130 lines the a 1,2-diacyl-sn-glycero-3-phospho-(1'-sn-glycerol) pocket. 3 consecutive transmembrane segments (helical) span residues P169–T189, G196–L216, and S225–I245.

It belongs to the Lgt family.

Its subcellular location is the cell membrane. It catalyses the reaction L-cysteinyl-[prolipoprotein] + a 1,2-diacyl-sn-glycero-3-phospho-(1'-sn-glycerol) = an S-1,2-diacyl-sn-glyceryl-L-cysteinyl-[prolipoprotein] + sn-glycerol 1-phosphate + H(+). The protein operates within protein modification; lipoprotein biosynthesis (diacylglyceryl transfer). Functionally, catalyzes the transfer of the diacylglyceryl group from phosphatidylglycerol to the sulfhydryl group of the N-terminal cysteine of a prolipoprotein, the first step in the formation of mature lipoproteins. This chain is Phosphatidylglycerol--prolipoprotein diacylglyceryl transferase, found in Clostridium novyi (strain NT).